Here is a 332-residue protein sequence, read N- to C-terminus: Methionyl-tRNA formyltransferase (332 aa).

124-127 (SLLP) contacts (6S)-5,6,7,8-tetrahydrofolate.

This sequence belongs to the Fmt family.

It carries out the reaction L-methionyl-tRNA(fMet) + (6R)-10-formyltetrahydrofolate = N-formyl-L-methionyl-tRNA(fMet) + (6S)-5,6,7,8-tetrahydrofolate + H(+). In terms of biological role, attaches a formyl group to the free amino group of methionyl-tRNA(fMet). The formyl group appears to play a dual role in the initiator identity of N-formylmethionyl-tRNA by promoting its recognition by IF2 and preventing the misappropriation of this tRNA by the elongation apparatus. The sequence is that of Methionyl-tRNA formyltransferase from Polynucleobacter asymbioticus (strain DSM 18221 / CIP 109841 / QLW-P1DMWA-1) (Polynucleobacter necessarius subsp. asymbioticus).